The following is a 256-amino-acid chain: Distal membrane-arm assembly complex protein 2 (256 aa).

Ser252 is modified (phosphoserine).

The protein belongs to the ATP synthase subunit s family. Interacts with incompletely assembled mitochondrial NADH:ubiquinone oxidoreductase complex (complex I).

It localises to the mitochondrion. Functionally, required for the assembly of the mitochondrial NADH:ubiquinone oxidoreductase complex (complex I). Involved in the assembly of the distal region of complex I. This chain is Distal membrane-arm assembly complex protein 2, found in Macaca fascicularis (Crab-eating macaque).